Consider the following 701-residue polypeptide: MARTTPISRYRNIGIVAHVDAGKTTTTERVLFYTGKSHKMGEVHDGAATTDWMVQEQERGITITSAAITAFWKGSEKQYKDEHRFNVIDTPGHVDFTIEVERSLRVLDGAVVVFCGTSGVEPQSETVWRQANKYGVPRLVYVNKMDRAGANFLRVIGQIKQRLGHTPVPIQLAIGSEDNFQGQIDLLTMEAVYWNDADKGMVPVRKPIPAELQELADEWRNNMVEAAAEANEELMNKYLEGEELTNVEIKAALRQRTIAGEIVLAVCGSSFKNKGVPLVLDAVIDYLPAPVDIPAIKGTDPDDETIELERHADDAEPFSALAFKIATDPFVGTLTFVRVYSGVLNSGDGVINSVKGKKERVGRMVQMHANAREEIKEVRAGDIAALIGMKDVTTGETLCNADKPIILVRMDFPEPVISVAVEPKTKDDQEKMGIALGKLAQEDPSFRVKTDEETGQTIISGMGELHLDILVDRMRREFNVEANIGKPQVSYRERITKNCEIEGKFVRQSGGRGQFGHCWIRFAPADEGQEGLQFVNEVVGGVVPKEYIPAIQKGIEEQMKNGVVAGYPLIGLKATVFDGSYHDVDSNEMAFKVAASMATKQLAQKGGGELLEPIMAVEVVTPEDYMGDVMGDLNRRRGMILGMEDTVSGKVIRAEVPLGEMFGYATDVRSMSQGRASYSMEFKKYNTAPAHIAETVSKKQG.

In terms of domain architecture, tr-type G spans 8–291; sequence SRYRNIGIVA…AVIDYLPAPV (284 aa). GTP is bound by residues 17 to 24, 89 to 93, and 143 to 146; these read AHVDAGKT, DTPGH, and NKMD.

The protein belongs to the TRAFAC class translation factor GTPase superfamily. Classic translation factor GTPase family. EF-G/EF-2 subfamily.

The protein resides in the cytoplasm. Its function is as follows. Catalyzes the GTP-dependent ribosomal translocation step during translation elongation. During this step, the ribosome changes from the pre-translocational (PRE) to the post-translocational (POST) state as the newly formed A-site-bound peptidyl-tRNA and P-site-bound deacylated tRNA move to the P and E sites, respectively. Catalyzes the coordinated movement of the two tRNA molecules, the mRNA and conformational changes in the ribosome. The polypeptide is Elongation factor G (Pseudomonas fluorescens (strain SBW25)).